The chain runs to 286 residues: S-adenosylmethionine-dependent methyltransferase UmaA (286 aa).

Residues 32–33, 67–75, 93–98, and 122–123 contribute to the S-adenosyl-L-methionine site; these read YT, LLDIGCGWG, TLSRNQ, and WD. Cysteine 268 is an active-site residue.

This sequence belongs to the CFA/CMAS family.

The protein localises to the cytoplasm. Its function is as follows. Methyltransferase that modifies short-chain fatty acids. In vitro, catalyzes the transfer of the methyl group from S-adenosyl-L-methionine (SAM) to the double bond of phospholipid-linked oleic acid to produce tuberculostearic acid (10-methylstearic-acid or TSA). The chain is S-adenosylmethionine-dependent methyltransferase UmaA from Mycobacterium tuberculosis (strain ATCC 25618 / H37Rv).